The sequence spans 299 residues: tRNA pseudouridine synthase B (299 aa).

D47 (nucleophile) is an active-site residue.

Belongs to the pseudouridine synthase TruB family. Type 1 subfamily.

The enzyme catalyses uridine(55) in tRNA = pseudouridine(55) in tRNA. In terms of biological role, responsible for synthesis of pseudouridine from uracil-55 in the psi GC loop of transfer RNAs. The chain is tRNA pseudouridine synthase B from Dechloromonas aromatica (strain RCB).